Reading from the N-terminus, the 163-residue chain is Transcription elongation factor GreA (163 aa).

Residues 45 to 65 (NAEYHAAREKQAFIEARINEL) are a coiled coil.

It belongs to the GreA/GreB family.

Functionally, necessary for efficient RNA polymerase transcription elongation past template-encoded arresting sites. The arresting sites in DNA have the property of trapping a certain fraction of elongating RNA polymerases that pass through, resulting in locked ternary complexes. Cleavage of the nascent transcript by cleavage factors such as GreA or GreB allows the resumption of elongation from the new 3'terminus. GreA releases sequences of 2 to 3 nucleotides. In Helicobacter hepaticus (strain ATCC 51449 / 3B1), this protein is Transcription elongation factor GreA.